We begin with the raw amino-acid sequence, 832 residues long: Alpha-glucan phosphorylase, H isozyme (832 aa).

At Lys-678 the chain carries N6-(pyridoxal phosphate)lysine.

The protein belongs to the glycogen phosphorylase family. Pyridoxal 5'-phosphate is required as a cofactor.

It localises to the cytoplasm. The enzyme catalyses [(1-&gt;4)-alpha-D-glucosyl](n) + phosphate = [(1-&gt;4)-alpha-D-glucosyl](n-1) + alpha-D-glucose 1-phosphate. In terms of biological role, phosphorylase is an important allosteric enzyme in carbohydrate metabolism. Enzymes from different sources differ in their regulatory mechanisms and in their natural substrates. However, all known phosphorylases share catalytic and structural properties. The chain is Alpha-glucan phosphorylase, H isozyme from Triticum aestivum (Wheat).